A 348-amino-acid chain; its full sequence is Dihydroorotase (348 aa).

The Zn(2+) site is built by histidine 17 and histidine 19. Residues 19-21 (HLR) and asparagine 45 each bind substrate. Lysine 103, histidine 140, and histidine 178 together coordinate Zn(2+). The residue at position 103 (lysine 103) is an N6-carboxylysine. Histidine 140 serves as a coordination point for substrate. Position 223 (leucine 223) interacts with substrate. Residue aspartate 251 participates in Zn(2+) binding. Residue aspartate 251 is part of the active site. Positions 255 and 267 each coordinate substrate.

It belongs to the metallo-dependent hydrolases superfamily. DHOase family. Class II DHOase subfamily. As to quaternary structure, homodimer. Requires Zn(2+) as cofactor.

It catalyses the reaction (S)-dihydroorotate + H2O = N-carbamoyl-L-aspartate + H(+). The protein operates within pyrimidine metabolism; UMP biosynthesis via de novo pathway; (S)-dihydroorotate from bicarbonate: step 3/3. Its function is as follows. Catalyzes the reversible cyclization of carbamoyl aspartate to dihydroorotate. The polypeptide is Dihydroorotase (Shigella flexneri).